Reading from the N-terminus, the 788-residue chain is Leucine-rich repeat and fibronectin type-III domain-containing protein 2 (788 aa).

An N-terminal signal peptide occupies residues 1 to 20 (METLLGGLLAFGMAFAVVDA). Residues 21-52 (CPKYCVCQNLSESLGTLCPSKGLLFVPPDIDR) form the LRRNT domain. The Extracellular segment spans residues 21-534 (CPKYCVCQNL…MHSQILGGTM (514 aa)). N-linked (GlcNAc...) asparagine glycosylation is found at N29 and N74. 7 LRR repeats span residues 53 to 74 (RTVE…DFAN), 77 to 98 (GLVD…SFLD), 101 to 122 (SLRS…TLRG), 125 to 146 (NLQH…AFED), 150 to 171 (TLED…SVRR), 174 to 195 (NLHQ…TFAD), and 198 to 219 (KLAR…PIFA). Residues 242-288 (NPLHCNCELLWLRRLERDDDLKTCGSPGGLKGRYFWHIREEEFVCEP) form the LRRCT domain. Residues 289-375 (PLITQHTHKL…GEATATVEVS (87 aa)) enclose the Ig-like domain. A disulfide bridge links C310 with C359. N-linked (GlcNAc...) asparagine glycosylation is found at N332, N341, N384, and N457. The disordered stretch occupies residues 383–423 (SNSTSRMAPPKSRLSDITGSSKTSRGGGGSGAGEPPKSTPE). One can recognise a Fibronectin type-III domain in the interval 422-518 (PERAVLVSDV…GCAQFFTKAD (97 aa)). The chain crosses the membrane as a helical span at residues 535 to 555 (ILVIGGIIVATLLVFIVILMV). Over 556–788 (RYKVCNHDAP…SSEWVMESTV (233 aa)) the chain is Cytoplasmic. Over residues 620–641 (CDSSSSSSLGSGEAAGLSRGPW) the composition is skewed to low complexity. Disordered regions lie at residues 620–655 (CDSS…PSLD) and 668–707 (SQRK…ATRA). Residues 642–651 (RLPPPAPRPK) show a composition bias toward pro residues. The PDZ-binding signature appears at 785 to 788 (ESTV).

Belongs to the LRFN family. Forms heteromeric complexes with LRFN1, LRFN3 and LRFN4. Can form homomeric complexes, but not across cell junctions. Can form heteromeric complexes with LRFN5. Interacts with DLG1, DLG3 and DLG4; interaction with DLG4 is mediated by the PDZ-binding domain. Also interacts with DLG2. Interacts with 2 NMDA receptor subunits GRIN1 and GRIN2A.

It localises to the membrane. It is found in the synapse. The protein resides in the postsynaptic cell membrane. In terms of biological role, promotes neurite outgrowth in hippocampal neurons. Enhances the cell surface expression of GRIN1 and GRIN2A NMDA receptor subunits. May play a role in redistributing DLG4 to the cell periphery. The protein is Leucine-rich repeat and fibronectin type-III domain-containing protein 2 (Lrfn2) of Rattus norvegicus (Rat).